Reading from the N-terminus, the 443-residue chain is 26S proteasome regulatory subunit rpn501 (443 aa).

Ser209 carries the phosphoserine modification. In terms of domain architecture, PCI spans 230–402 (DVCKYYRAVY…QVISFKKSQN (173 aa)).

Belongs to the proteasome subunit p55 family.

Its subcellular location is the nucleus. Functionally, acts as a regulatory subunit of the 26S proteasome which is involved in the ATP-dependent degradation of ubiquitinated proteins. Required for proper proteasome assembly. The protein is 26S proteasome regulatory subunit rpn501 (rpn501) of Schizosaccharomyces pombe (strain 972 / ATCC 24843) (Fission yeast).